Here is a 62-residue protein sequence, read N- to C-terminus: DNA-directed RNA polymerase subunit Rpo10 (62 aa).

Zn(2+) contacts are provided by C6, C9, C43, and C44.

Belongs to the archaeal Rpo10/eukaryotic RPB10 RNA polymerase subunit family. As to quaternary structure, part of the RNA polymerase complex. Zn(2+) is required as a cofactor.

It is found in the cytoplasm. It catalyses the reaction RNA(n) + a ribonucleoside 5'-triphosphate = RNA(n+1) + diphosphate. Its function is as follows. DNA-dependent RNA polymerase (RNAP) catalyzes the transcription of DNA into RNA using the four ribonucleoside triphosphates as substrates. The chain is DNA-directed RNA polymerase subunit Rpo10 from Methanoculleus marisnigri (strain ATCC 35101 / DSM 1498 / JR1).